A 66-amino-acid chain; its full sequence is Large ribosomal subunit protein bL31 (66 aa).

Zn(2+) contacts are provided by C16, C18, C36, and C39.

The protein belongs to the bacterial ribosomal protein bL31 family. Type A subfamily. Part of the 50S ribosomal subunit during exponential growth. Requires Zn(2+) as cofactor.

Its function is as follows. Binds the 23S rRNA. Functionally, while neither of the L31 paralogs is essential, this protein seems to function as the main L31 protein. Has a lower affinity for 70S ribosomes than the non-zinc-containing paralog L31B (ytiA); is displaced by it to varying extents, even under zinc-replete conditions. This is Large ribosomal subunit protein bL31 (rpmE) from Bacillus subtilis (strain 168).